An 88-amino-acid polypeptide reads, in one-letter code: MSFTDETVRFEFGDSDKKEIGETLVDVYNVLEAKGYNPINQIVGYVLSGDPAYIPRHDDARNKIRRFDRDDIVEELIKNYLKDNGVNL.

Belongs to the UPF0297 family.

The chain is UPF0297 protein LACR_0137 from Lactococcus lactis subsp. cremoris (strain SK11).